An 89-amino-acid chain; its full sequence is uncharacterized protein (89 aa).

This is an uncharacterized protein from Dictyostelium discoideum (Social amoeba).